Reading from the N-terminus, the 572-residue chain is Proline--tRNA ligase (572 aa).

Belongs to the class-II aminoacyl-tRNA synthetase family. ProS type 1 subfamily. Homodimer.

It is found in the cytoplasm. The enzyme catalyses tRNA(Pro) + L-proline + ATP = L-prolyl-tRNA(Pro) + AMP + diphosphate. Functionally, catalyzes the attachment of proline to tRNA(Pro) in a two-step reaction: proline is first activated by ATP to form Pro-AMP and then transferred to the acceptor end of tRNA(Pro). As ProRS can inadvertently accommodate and process non-cognate amino acids such as alanine and cysteine, to avoid such errors it has two additional distinct editing activities against alanine. One activity is designated as 'pretransfer' editing and involves the tRNA(Pro)-independent hydrolysis of activated Ala-AMP. The other activity is designated 'posttransfer' editing and involves deacylation of mischarged Ala-tRNA(Pro). The misacylated Cys-tRNA(Pro) is not edited by ProRS. The polypeptide is Proline--tRNA ligase (Salmonella newport (strain SL254)).